The primary structure comprises 401 residues: Phosphoglycerate kinase (401 aa).

Substrate is bound by residues 23 to 25, Arg-38, 61 to 64, Arg-120, and Arg-153; these read DLN and HFGR. Residues Lys-203, Glu-325, and 355 to 358 each bind ATP; that span reads GGDT.

Belongs to the phosphoglycerate kinase family. In terms of assembly, monomer.

Its subcellular location is the cytoplasm. The enzyme catalyses (2R)-3-phosphoglycerate + ATP = (2R)-3-phospho-glyceroyl phosphate + ADP. The protein operates within carbohydrate degradation; glycolysis; pyruvate from D-glyceraldehyde 3-phosphate: step 2/5. The sequence is that of Phosphoglycerate kinase from Rhizobium johnstonii (strain DSM 114642 / LMG 32736 / 3841) (Rhizobium leguminosarum bv. viciae).